Here is an 86-residue protein sequence, read N- to C-terminus: Acyl carrier protein (86 aa).

Positions 2–82 constitute a Carrier domain; that stretch reads ATVFERVKKV…AVVDYLKSKG (81 aa). Residue Ser37 is modified to O-(pantetheine 4'-phosphoryl)serine.

The protein belongs to the acyl carrier protein (ACP) family. In terms of processing, 4'-phosphopantetheine is transferred from CoA to a specific serine of apo-ACP by AcpS. This modification is essential for activity because fatty acids are bound in thioester linkage to the sulfhydryl of the prosthetic group.

The protein resides in the cytoplasm. It participates in lipid metabolism; fatty acid biosynthesis. In terms of biological role, carrier of the growing fatty acid chain in fatty acid biosynthesis. The sequence is that of Acyl carrier protein from Dehalococcoides mccartyi (strain ATCC BAA-2100 / JCM 16839 / KCTC 5957 / BAV1).